Here is a 170-residue protein sequence, read N- to C-terminus: Cathelicidin antimicrobial peptide (170 aa).

A signal peptide spans 1–30; sequence MKTQRDGHSLGRWSLVLLLLGLVMPLAIVA. Positions 31 to 131 are cleaved as a propeptide — cathelin-like domain (CLD); it reads QVLSYKEAVL…DISCDKDNKR (101 aa). Disulfide bonds link cysteine 86-cysteine 97 and cysteine 108-cysteine 125. Residues 150–162 form an active core region; it reads FKRIVQRIKDFLR.

Belongs to the cathelicidin family. In terms of assembly, monomer, homodimer or homotrimer (in vitro). Oligomerizes as tetra- or hexamer in solution (in vitro). Proteolytically cleaved by proteinase PRTN3 into antibacterial peptide LL-37. Proteolytically cleaved by cathepsin CTSG and neutrophil elastase ELANE. In terms of processing, resistant to proteolytic degradation in solution, and when bound to both zwitterionic (mimicking mammalian membranes) and negatively charged membranes (mimicking bacterial membranes). Post-translationally, after secretion onto the skin surface, the CAMP gene product is processed by a serine protease-dependent mechanism into multiple novel antimicrobial peptides distinct from and shorter than cathelicidin LL-37. These peptides show enhanced antimicrobial action, acquiring the ability to kill skin pathogens such as S.aureus, E.coli and C.albicans. These peptides have lost the ability to stimulate CXCL8/IL8 release from keratinocytes. The peptides act synergistically, killing bacteria at lower concentrations when present together, and maintain activity at increased salt condition.

The protein resides in the secreted. The protein localises to the vesicle. Antimicrobial protein that is an integral component of the innate immune system. Binds to bacterial lipopolysaccharides (LPS). Acts via neutrophil N-formyl peptide receptors to enhance the release of CXCL2. Postsecretory processing generates multiple cathelicidin antimicrobial peptides with various lengths which act as a topical antimicrobial defense in sweat on skin. The unprocessed precursor form, cathelicidin antimicrobial peptide, inhibits the growth of Gram-negative E.coli and E.aerogenes with efficiencies comparable to that of the mature peptide LL-37 (in vitro). Functionally, antimicrobial peptide that is an integral component of the innate immune system. Binds to bacterial lipopolysaccharides (LPS). Causes membrane permeabilization by forming transmembrane pores (in vitro). Causes lysis of E.coli. Exhibits antimicrobial activity against Gram-negative bacteria such as P.aeruginosa, S.typhimurium, E.aerogenes, E.coli and P.syringae, Gram-positive bacteria such as L.monocytogenes, S.epidermidis, S.pyogenes and S.aureus, as well as vancomycin-resistant enterococci (in vitro). Exhibits antimicrobial activity against methicillin-resistant S.aureus, P.mirabilis, and C.albicans in low-salt media, but not in media containing 100 mM NaCl (in vitro). Forms chiral supramolecular assemblies with quinolone signal (PQS) molecules of P.aeruginosa, which may lead to interference of bacterial quorum signaling and perturbance of bacterial biofilm formation. May form supramolecular fiber-like assemblies on bacterial membranes. Induces cytokine and chemokine producation as well as TNF/TNFA and CSF2/GMCSF production in normal human keratinocytes. Exhibits hemolytic activity against red blood cells. Its function is as follows. Exhibits antimicrobial activity against E.coli and B.megaterium (in vitro). The polypeptide is Cathelicidin antimicrobial peptide (Pan troglodytes (Chimpanzee)).